The primary structure comprises 282 residues: Sulfur carrier protein FdhD (282 aa).

The active-site Cysteine persulfide intermediate is cysteine 126. 265–270 provides a ligand contact to Mo-bis(molybdopterin guanine dinucleotide); it reads FVRNNR.

Belongs to the FdhD family.

The protein localises to the cytoplasm. In terms of biological role, required for formate dehydrogenase (FDH) activity. Acts as a sulfur carrier protein that transfers sulfur from IscS to the molybdenum cofactor prior to its insertion into FDH. The sequence is that of Sulfur carrier protein FdhD from Thermoplasma acidophilum (strain ATCC 25905 / DSM 1728 / JCM 9062 / NBRC 15155 / AMRC-C165).